The primary structure comprises 662 residues: A-kinase anchor protein 10, mitochondrial (662 aa).

A mitochondrion-targeting transit peptide spans 1 to 28 (MRGAGPSPRHSPRALRPDPGPAMSFFRR). Disordered stretches follow at residues 1-55 (MRGA…SPQK), 178-205 (KQSSLAEPVSPSKRHETPASSVTEALDR), and 242-280 (GHSARSLHREVARTGSHQIPTDSQDSSSRLAVGSRNSCS). Residues 32–43 (GKEQEKTLDVKS) are compositionally biased toward basic and acidic residues. 2 positions are modified to phosphoserine: Ser52 and Ser189. RGS domains follow at residues 125-369 (TLEQ…CKYQ) and 379-505 (YLAD…YKYL). Positions 256-280 (GSHQIPTDSQDSSSRLAVGSRNSCS) are enriched in polar residues. Residue Ser281 is modified to Phosphoserine. Positions 634–647 (LAWKIAKMIVSDVM) are PKA-RII subunit binding.

In terms of tissue distribution, highly expressed in testis, kidney and lung, followed by brain, skeletal muscle, liver, spleen and heart. Also expressed in brown adipose tissue and pancreas.

The protein resides in the mitochondrion. Its subcellular location is the membrane. It is found in the cytoplasm. Its function is as follows. Differentially targeted protein that binds to type I and II regulatory subunits of protein kinase A and anchors them to the mitochondria or the plasma membrane. Although the physiological relevance between PKA and AKAPS with mitochondria is not fully understood, one idea is that BAD, a proapoptotic member, is phosphorylated and inactivated by mitochondria-anchored PKA. It cannot be excluded too that it may facilitate PKA as well as G protein signal transduction, by acting as an adapter for assembling multiprotein complexes. With its RGS domain, it could lead to the interaction to G-alpha proteins, providing a link between the signaling machinery and the downstream kinase. The protein is A-kinase anchor protein 10, mitochondrial (Akap10) of Mus musculus (Mouse).